The following is a 196-amino-acid chain: MSYYIPYVIERTGRGERSYDIYSRLLKDRIIMLSGEINDAVASSIVAQLLFLEAEDPDKDIYLYINSPGGVITSGMSIYDTMNYIKPDVSTICIGQAASMGAFLLSSGTKGKRYALPHARIMIHQPLGGAQGQATDIEIQAKEILRLKKILNEILAENTGQSVKKIAKDTERDFFMSSEEAKEYGLIDQVLEKSAR.

The active-site Nucleophile is serine 99. The active site involves histidine 124.

It belongs to the peptidase S14 family. Fourteen ClpP subunits assemble into 2 heptameric rings which stack back to back to give a disk-like structure with a central cavity, resembling the structure of eukaryotic proteasomes.

The protein localises to the cytoplasm. It carries out the reaction Hydrolysis of proteins to small peptides in the presence of ATP and magnesium. alpha-casein is the usual test substrate. In the absence of ATP, only oligopeptides shorter than five residues are hydrolyzed (such as succinyl-Leu-Tyr-|-NHMec, and Leu-Tyr-Leu-|-Tyr-Trp, in which cleavage of the -Tyr-|-Leu- and -Tyr-|-Trp bonds also occurs).. Functionally, cleaves peptides in various proteins in a process that requires ATP hydrolysis. Has a chymotrypsin-like activity. Plays a major role in the degradation of misfolded proteins. This is ATP-dependent Clp protease proteolytic subunit from Nitratiruptor sp. (strain SB155-2).